Consider the following 1318-residue polypeptide: DNA-directed RNA polymerase subunit beta' (1318 aa).

Zn(2+)-binding residues include Cys-221, Cys-295, Cys-302, and Cys-305.

It belongs to the RNA polymerase beta' chain family. RpoC2 subfamily. In terms of assembly, in cyanobacteria the RNAP catalytic core is composed of 2 alpha, 1 beta, 1 beta', 1 gamma and 1 omega subunit. When a sigma factor is associated with the core the holoenzyme is formed, which can initiate transcription. The cofactor is Zn(2+).

It catalyses the reaction RNA(n) + a ribonucleoside 5'-triphosphate = RNA(n+1) + diphosphate. In terms of biological role, DNA-dependent RNA polymerase catalyzes the transcription of DNA into RNA using the four ribonucleoside triphosphates as substrates. This chain is DNA-directed RNA polymerase subunit beta', found in Synechococcus sp. (strain ATCC 27144 / PCC 6301 / SAUG 1402/1) (Anacystis nidulans).